Reading from the N-terminus, the 205-residue chain is uncharacterized protein (205 aa).

A coiled-coil region spans residues 10 to 75 (QDLLSAVDQQ…AANLMTVMTD (66 aa)). Residues 108–141 (MPLPSSNTNNDQTSPPASGKTSETPKKNPTNAMF) are disordered. Positions 111 to 141 (PSSNTNNDQTSPPASGKTSETPKKNPTNAMF) are enriched in polar residues.

Belongs to the asfivirus K205R family.

Its subcellular location is the host cytoplasm. In terms of biological role, induces host endoplasmic reticulum stress and consequently activates autophagy and NF-kappa-B signaling pathway. In turn, may induce autophagy-mediated STING1 degradation and innate immune evasion. This is an uncharacterized protein from Ornithodoros (relapsing fever ticks).